Reading from the N-terminus, the 584-residue chain is Aspartate--tRNA(Asp/Asn) ligase (584 aa).

Glu177 lines the L-aspartate pocket. Residues 201-204 (QLFK) are aspartate. Arg223 provides a ligand contact to L-aspartate. Residues 223 to 225 (RDE) and Gln232 contribute to the ATP site. His447 is a binding site for L-aspartate. Glu481 contributes to the ATP binding site. Residue Arg488 coordinates L-aspartate. 533–536 (GLDR) is a binding site for ATP.

It belongs to the class-II aminoacyl-tRNA synthetase family. Type 1 subfamily. Homodimer.

It localises to the cytoplasm. The catalysed reaction is tRNA(Asx) + L-aspartate + ATP = L-aspartyl-tRNA(Asx) + AMP + diphosphate. In terms of biological role, aspartyl-tRNA synthetase with relaxed tRNA specificity since it is able to aspartylate not only its cognate tRNA(Asp) but also tRNA(Asn). Reaction proceeds in two steps: L-aspartate is first activated by ATP to form Asp-AMP and then transferred to the acceptor end of tRNA(Asp/Asn). This Chlamydia abortus (strain DSM 27085 / S26/3) (Chlamydophila abortus) protein is Aspartate--tRNA(Asp/Asn) ligase.